The sequence spans 279 residues: Secreted RxLR effector protein 152 (279 aa).

The first 22 residues, 1 to 22 (MRNGSVLFGLFFIGHSCSVLLA), serve as a signal peptide directing secretion. Residues 47–62 (RTLQADDSERTLAEER) carry the RxLR-dEER motif.

It belongs to the RxLR effector family.

Its subcellular location is the secreted. The protein localises to the host nucleus. In terms of biological role, secreted effector that completely suppresses the host cell death induced by cell death-inducing proteins. The protein is Secreted RxLR effector protein 152 of Plasmopara viticola (Downy mildew of grapevine).